We begin with the raw amino-acid sequence, 769 residues long: 5-methyltetrahydropteroyltriglutamate--homocysteine methyltransferase (769 aa).

5-methyltetrahydropteroyltri-L-glutamate is bound by residues 17 to 20 (RELK) and lysine 118. L-homocysteine contacts are provided by residues 441–443 (IGS) and glutamate 494. L-methionine contacts are provided by residues 441–443 (IGS) and glutamate 494. 5-methyltetrahydropteroyltri-L-glutamate contacts are provided by residues 525–526 (RC) and tryptophan 571. Aspartate 609 serves as a coordination point for L-homocysteine. Aspartate 609 contributes to the L-methionine binding site. Position 615 (glutamate 615) interacts with 5-methyltetrahydropteroyltri-L-glutamate. The Zn(2+) site is built by histidine 651, cysteine 653, and glutamate 675. Residue histidine 705 is the Proton donor of the active site. Cysteine 737 serves as a coordination point for Zn(2+).

This sequence belongs to the vitamin-B12 independent methionine synthase family. It depends on Zn(2+) as a cofactor.

It catalyses the reaction 5-methyltetrahydropteroyltri-L-glutamate + L-homocysteine = tetrahydropteroyltri-L-glutamate + L-methionine. Its pathway is amino-acid biosynthesis; L-methionine biosynthesis via de novo pathway; L-methionine from L-homocysteine (MetE route): step 1/1. Catalyzes the transfer of a methyl group from 5-methyltetrahydrofolate to homocysteine resulting in methionine formation. In Blochmanniella floridana, this protein is 5-methyltetrahydropteroyltriglutamate--homocysteine methyltransferase.